The sequence spans 84 residues: Small ribosomal subunit protein uS17 (84 aa).

The protein belongs to the universal ribosomal protein uS17 family. Part of the 30S ribosomal subunit.

Functionally, one of the primary rRNA binding proteins, it binds specifically to the 5'-end of 16S ribosomal RNA. The polypeptide is Small ribosomal subunit protein uS17 (Borrelia recurrentis (strain A1)).